The chain runs to 276 residues: Glyoxal reductase (276 aa).

The Proton donor role is filled by Tyr54. Residue His112 coordinates substrate. 190–242 (SPLMQGQLLDNEVLTQIAEKHNKSVAQVILRWDLQHGVVTIPKSIKEHRIIEN) is an NADP(+) binding site.

Belongs to the aldo/keto reductase family.

The catalysed reaction is (S)-lactaldehyde + NADP(+) = methylglyoxal + NADPH + H(+). Its function is as follows. Reduces glyoxal and methylglyoxal (2-oxopropanal). Is not involved in the vitamin B6 biosynthesis. The protein is Glyoxal reductase (yvgN) of Bacillus subtilis (strain 168).